Consider the following 103-residue polypeptide: MQNQRIRIRLKAFDHRLIDQSTAEIVDTAKRTGAQVHGPIPLPTRKEHFTILISPHVNKDARDQYVIRTHKRLVDIVKPTEKTVDALMRLELAAGVDVQISLG.

This sequence belongs to the universal ribosomal protein uS10 family. As to quaternary structure, part of the 30S ribosomal subunit.

Involved in the binding of tRNA to the ribosomes. This is Small ribosomal subunit protein uS10 from Baumannia cicadellinicola subsp. Homalodisca coagulata.